Here is a 570-residue protein sequence, read N- to C-terminus: Urease subunit alpha (570 aa).

Residues 131-570 enclose the Urease domain; that stretch reads GGFDSHIHFI…LPLAQRYFMF (440 aa). Positions 136, 138, and 219 each coordinate Ni(2+). At lysine 219 the chain carries N6-carboxylysine. Substrate is bound at residue histidine 221. Positions 248 and 274 each coordinate Ni(2+). Histidine 322 (proton donor) is an active-site residue. Aspartate 362 is a binding site for Ni(2+).

Belongs to the metallo-dependent hydrolases superfamily. Urease alpha subunit family. In terms of assembly, heterotrimer of UreA (gamma), UreB (beta) and UreC (alpha) subunits. Three heterotrimers associate to form the active enzyme. Ni cation serves as cofactor. Carboxylation allows a single lysine to coordinate two nickel ions.

It is found in the cytoplasm. It catalyses the reaction urea + 2 H2O + H(+) = hydrogencarbonate + 2 NH4(+). It participates in nitrogen metabolism; urea degradation; CO(2) and NH(3) from urea (urease route): step 1/1. The protein is Urease subunit alpha of Rhodopseudomonas palustris (strain ATCC BAA-98 / CGA009).